The sequence spans 1345 residues: DNA-directed RNA polymerase subunit beta' (1345 aa).

Residues Cys-60, Cys-62, Cys-75, and Cys-78 each contribute to the Zn(2+) site. Residues Asp-536, Asp-538, and Asp-540 each contribute to the Mg(2+) site. Residues Cys-895, Cys-974, Cys-981, and Cys-984 each coordinate Zn(2+).

The protein belongs to the RNA polymerase beta' chain family. The RNAP catalytic core consists of 2 alpha, 1 beta, 1 beta' and 1 omega subunit. When a sigma factor is associated with the core the holoenzyme is formed, which can initiate transcription. Mg(2+) serves as cofactor. The cofactor is Zn(2+).

It carries out the reaction RNA(n) + a ribonucleoside 5'-triphosphate = RNA(n+1) + diphosphate. Functionally, DNA-dependent RNA polymerase catalyzes the transcription of DNA into RNA using the four ribonucleoside triphosphates as substrates. The polypeptide is DNA-directed RNA polymerase subunit beta' (Bifidobacterium longum (strain DJO10A)).